The primary structure comprises 873 residues: MASRRKSTTPCMVLASEQDPDLELISDLEEGPPVLTPVENARAESVSSDEEVHESVDSDNQQNKKVEGGYECKYCTFQTPDLNMFTFHVDSEHPNVVLNSSYVCVECNFLTKRYDALSEHNLKYHPGEENFKLTMVKRNNQTIFEQTINDLTFDGSFVKEENTEQGESIDVSSSGISISKTPIMKMMKNKVENKRITVHHNSAEGTSEEKENGVKASREENAENTSSSASESNTSTSTVNQVHPSPAGTVVTPTAVLPGLAQVITAVSAQQNSNLVPKVLIPVNSIPTYNAALDNNPLLLNTYNKFPYPTMSEITVLSAQAKYTEEQIKIWFSAQRLKHGVSWTPEEVEEARRKQFNGTVHTVPQTITVIPTHISTGSNGLPSILQTCQIVGQPGLVLTQVAGANTLPVTAPIALTVAGVPNQTNVQKSQVPAAQPAAETKPATAAVPSSPSVRPEAALVNPDSFGIRAKKTKEQLAELKVSYLKNQFPHDSEIIRLMKITGLTKGEIKKWFSDTRYNQRNSKSNQCLHLNNDSSATIIIDSSDETPEPPAAAASQPKQSWNPFPDFAPQKFKEKTAEQLRVLQASFLNSSVLTDEELNRLRAQTKLTRREIDAWFTEKNKTKALKDEKVEVDESNVGSSKEEPGENSPGDEAVAPKSAGTGKICKKTPEQLHMLKSAFVRTQWPSPEEYDKLAEESGLARTDIVSWFGDTRYAWKNGNLKWYYYYQSSNSSSLNGLSSLRKRGRGRPKGRGRGRPRGRPRGGKRMNTWDRVPSLIKFKTGTAILKDYYLKHKFLNEQDLDELVNRSHMGYEQVREWFAERQRRSELGIELFEENEEEDEVIDDQEEDEEETDDSDTWEPPRHVKRKLSKSDD.

The segment at 1 to 63 is disordered; the sequence is MASRRKSTTP…ESVDSDNQQN (63 aa). The span at 18–30 shows a compositional bias: acidic residues; sequence QDPDLELISDLEE. Residue threonine 36 is modified to Phosphothreonine. Phosphoserine is present on residues serine 45, serine 47, and serine 48. 2 C2H2-type zinc fingers span residues 70 to 93 and 102 to 125; these read YECK…DSEH and YVCV…LKYH. Residue lysine 159 forms a Glycyl lysine isopeptide (Lys-Gly) (interchain with G-Cter in SUMO2) linkage. The disordered stretch occupies residues 198–247; that stretch reads VHHNSAEGTSEEKENGVKASREENAENTSSSASESNTSTSTVNQVHPSPA. Serine 202 carries the phosphoserine modification. A compositionally biased stretch (basic and acidic residues) spans 207-221; that stretch reads SEEKENGVKASREEN. The span at 223–238 shows a compositional bias: low complexity; that stretch reads ENTSSSASESNTSTST. The required for dimerization stretch occupies residues 272-432; that stretch reads NSNLVPKVLI…QTNVQKSQVP (161 aa). Residues 272 to 564 are required for interaction with NFYA; it reads NSNLVPKVLI…SQPKQSWNPF (293 aa). A DNA-binding region (homeobox 1) is located at residues 284–346; it reads NSIPTYNAAL…LKHGVSWTPE (63 aa). Residues 430 to 455 are disordered; the sequence is QVPAAQPAAETKPATAAVPSSPSVRP. Residues lysine 441 and lysine 485 each participate in a glycyl lysine isopeptide (Lys-Gly) (interchain with G-Cter in SUMO2) cross-link. Residues 464 to 526 constitute a DNA-binding region (homeobox 2); sequence SFGIRAKKTK…YNQRNSKSNQ (63 aa). Disordered stretches follow at residues 540–568, 627–664, and 731–767; these read IDSS…PDFA, DEKV…TGKI, and SSSL…KRMN. Positions 551-560 are enriched in low complexity; sequence AAAASQPKQS. The homeobox 3 DNA-binding region spans 569 to 631; the sequence is PQKFKEKTAE…TKALKDEKVE (63 aa). A Glycyl lysine isopeptide (Lys-Gly) (interchain with G-Cter in SUMO2) cross-link involves residue lysine 629. Position 648 is a phosphoserine (serine 648). The homeobox 4 DNA-binding region spans 660 to 722; the sequence is GTGKICKKTP…YAWKNGNLKW (63 aa). The tract at residues 734–768 is required for nuclear localization; it reads LNGLSSLRKRGRGRPKGRGRGRPRGRPRGGKRMNT. The segment covering 740–764 has biased composition (basic residues); it reads LRKRGRGRPKGRGRGRPRGRPRGGK. Phosphoserine is present on serine 774. Positions 777 to 832 form a DNA-binding region, homeobox 5; sequence KFKTGTAILKDYYLKHKFLNEQDLDELVNRSHMGYEQVREWFAERQRRSELGIELF. The tract at residues 829–873 is disordered; sequence IELFEENEEEDEVIDDQEEDEEETDDSDTWEPPRHVKRKLSKSDD. The segment covering 831–857 has biased composition (acidic residues); the sequence is LFEENEEEDEVIDDQEEDEEETDDSDT. The tract at residues 831 to 873 is required for repressor activity; it reads LFEENEEEDEVIDDQEEDEEETDDSDTWEPPRHVKRKLSKSDD. A compositionally biased stretch (basic residues) spans 863–873; the sequence is HVKRKLSKSDD.

The protein belongs to the ZHX family. Forms homodimers. Heterodimer (via HD1 domain) with ZHX2 (via HD1 domain). Also forms a heterodimer with ZHX3 which is a prerequisite for repressor activity. Interacts with ATF7IP and NFYA. Interacts (via homeobox domains) with DNMT3B (via PWWP domain). Ubiquitously expressed.

It is found in the nucleus. Its function is as follows. Acts as a transcriptional repressor. Increases DNMT3B-mediated repressive transcriptional activity when DNMT3B is tethered to DNA. May link molecule between DNMT3B and other co-repressor proteins. This is Zinc fingers and homeoboxes protein 1 (Zhx1) from Rattus norvegicus (Rat).